An 861-amino-acid chain; its full sequence is MKLGWIEVAALAAASVVSAKDDLAYSPPFYPSPWADGQGEWAEVYKRAVDIVSQMTLTEKVNLTTGTGWQLERCVGQTGSVPRLNIPSLCLQDSPLGIRFSDYNSAFPAGVNVAATWDKTLAYLRGQAMGEEFSDKGIDVQLGPAAGPLGAHPDGGRNWEGFSPDPALTGVLFAETIKGIQDAGVIATAKHYIMNEQEHFRQQPEAAGYGFNVSDSLSSNVDDKTMHELYLWPFADAVRAGVGAVMCSYNQINNSYGCENSETLNKLLKAELGFQGFVMSDWTAHHSGVGAALAGLDMSMPGDVTFDSGTSFWGANLTVGVLNGTIPQWRVDDMAVRIMAAYYKVGRDTKYTPPNFSSWTRDEYGFAHNHVSEGAYERVNEFVDVQRDHADLIRRIGAQSTVLLKNKGALPLSRKEKLVALLGEDAGSNSWGANGCDDRGCDNGTLAMAWGSGTANFPYLVTPEQAIQNEVLQGRGNVFAVTDSWALDKIAAAARQASVSLVFVNSDSGEGYLSVDGNEGDRNNITLWKNGDNVVKTAANNCNNTVVIIHSVGPVLIDEWYDHPNVTGILWAGLPGQESGNSIADVLYGRVNPGAKSPFTWGKTRESYGSPLVKDANNGNGAPQSDFTQGVFIDYRHFDKFNETPIYEFGYGLSYTTFELSDLHVQPLNASRYTPTSGMTEAAKNFGEIGDASEYVYPEGLERIHEFIYPWINSTDLKASSDDSNYGWEDSKYIPEGATDGSAQPRLPASGGAGGNPGLYEDLFRVSVKVKNTGNVAGDEVPQLYVSLGGPNEPKVVLRKFERIHLAPSQEAVWTTTLTRRDLANWDVSAQDWTVTPYPKTIYVGNSSRKLPLQASLPKAQ.

Positions 1-19 are cleaved as a signal peptide; it reads MKLGWIEVAALAAASVVSA. N-linked (GlcNAc...) asparagine glycans are attached at residues Asn-62, Asn-212, and Asn-253. Asp-281 is a catalytic residue. N-linked (GlcNAc...) asparagine glycans are attached at residues Asn-316, Asn-323, Asn-355, Asn-443, Asn-524, Asn-543, Asn-565, Asn-669, and Asn-713. Positions 730–754 are disordered; the sequence is DSKYIPEGATDGSAQPRLPASGGAG. Asn-846 is a glycosylation site (N-linked (GlcNAc...) asparagine).

Belongs to the glycosyl hydrolase 3 family.

The protein resides in the secreted. It carries out the reaction Hydrolysis of terminal, non-reducing beta-D-glucosyl residues with release of beta-D-glucose.. It participates in glycan metabolism; cellulose degradation. Functionally, beta-glucosidases are one of a number of cellulolytic enzymes involved in the degradation of cellulosic biomass. Catalyzes the last step releasing glucose from the inhibitory cellobiose. The chain is Probable beta-glucosidase A (bglA) from Aspergillus oryzae (strain ATCC 42149 / RIB 40) (Yellow koji mold).